A 408-amino-acid polypeptide reads, in one-letter code: Multidrug resistance protein MdtG (408 aa).

The next 11 membrane-spanning stretches (helical) occupy residues 16 to 36 (LIVAWLGCFLTGAAFSLVMPF), 58 to 78 (IVFSITFLFSAIASPFWGGLA), 92 to 112 (LGMGIVMVLMGLAQNIWQFLI), 115 to 135 (ALLGLLGGFVPNANALIATQV), 146 to 166 (TLSTGGVSGALLGPMAGGLLA), 173 to 193 (PVFFITASVLILCFFVTLFCI), 224 to 244 (LFVTTLIIQVATGSIAPILTL), 256 to 276 (VAFISGMIASVPGVAALLSAP), 290 to 310 (ILITALIFSVLLLIPMSYVQT), 319 to 339 (FLLGAADGALLPAVQTLLVYN), and 378 to 398 (AVFLVTAGVVLFNAVYSWNSL).

The protein belongs to the major facilitator superfamily. DHA1 family. MdtG (TC 2.A.1.2.20) subfamily.

It localises to the cell inner membrane. Confers resistance to fosfomycin and deoxycholate. In Escherichia coli O81 (strain ED1a), this protein is Multidrug resistance protein MdtG.